Reading from the N-terminus, the 242-residue chain is Small ribosomal subunit protein uS2 (242 aa).

It belongs to the universal ribosomal protein uS2 family.

This Vibrio campbellii (strain ATCC BAA-1116) protein is Small ribosomal subunit protein uS2.